The primary structure comprises 707 residues: DNA-binding protein RFX2 (707 aa).

Residue Ser-33 is modified to Phosphoserine. The RFX-type winged-helix DNA-binding region spans 204-279; it reads HLQWLLDNYE…YHYYGIRLKP (76 aa). The segment at 297–337 is disordered; that stretch reads QQPVHQKPRYRPAQKTDSLGESGSHSSLHSTPEQAMAAQSQ. The span at 315–337 shows a compositional bias: low complexity; sequence LGESGSHSSLHSTPEQAMAAQSQ. Ser-420 carries the phosphoserine modification.

This sequence belongs to the RFX family. As to quaternary structure, homodimer; probably only forms homodimers in testis. Heterodimer; heterodimerizes with RFX1 and RFX3.

It is found in the nucleus. It localises to the cytoplasm. In terms of biological role, transcription factor that acts as a key regulator of spermatogenesis. Acts by regulating expression of genes required for the haploid phase during spermiogenesis, such as genes required for cilium assembly and function. Recognizes and binds the X-box, a regulatory motif with DNA sequence 5'-GTNRCC(0-3N)RGYAAC-3' present on promoters. Probably activates transcription of the testis-specific histone gene H1-6. The sequence is that of DNA-binding protein RFX2 (RFX2) from Bos taurus (Bovine).